Consider the following 148-residue polypeptide: Dermatopontin (148 aa).

An intrachain disulfide couples Cys14 to Cys40. Asn44 carries an N-linked (GlcNAc...) asparagine glycan. Cystine bridges form between Cys66–Cys93 and Cys103–Cys147.

Belongs to the dermatopontin family. In terms of processing, the terminal mannose residues of the polysaccharide are 3-O-methylated. No tyrosine sulfation was detected.

It is found in the secreted. The protein resides in the extracellular space. Its subcellular location is the extracellular matrix. Seems to mediate adhesion by cell surface integrin binding. The polypeptide is Dermatopontin (Biomphalaria glabrata (Bloodfluke planorb)).